Here is a 406-residue protein sequence, read N- to C-terminus: Arginine deiminase (406 aa).

The active-site Amidino-cysteine intermediate is the C396.

It belongs to the arginine deiminase family.

It is found in the cytoplasm. It carries out the reaction L-arginine + H2O = L-citrulline + NH4(+). Its pathway is amino-acid degradation; L-arginine degradation via ADI pathway; carbamoyl phosphate from L-arginine: step 1/2. This is Arginine deiminase from Aliivibrio fischeri (strain ATCC 700601 / ES114) (Vibrio fischeri).